The chain runs to 622 residues: Low affinity potassium transport system protein Kup (622 aa).

12 helical membrane passes run 9–29 (LPAITLAAIGVVYGDIGTSPL), 49–69 (VFGFLSLIFWLLIFVVSIKYL), 103–123 (VIMGLIGGSFFYGEVVITPAI), 137–157 (PQLDTWIVPLSIIVLTLLFMI), 165–185 (VGKLFAPIMLTWFLILAGLGL), 213–233 (VSFIALGAVVLSITGVEALYA), 247–267 (WFTVVLPSLTLNYFGQGALLL), 276–296 (PFFLLAPDWALIPLLIIAALA), 337–357 (IYIPFVNWMLYVAVVIVIVSF), 363–383 (LAAAYGIAVTGTMVLTSILST), 396–416 (FVALILIAFLCVDIPLFTANL), and 419–439 (LLSGGWLPLSLGTVMFIVMTT).

This sequence belongs to the HAK/KUP transporter (TC 2.A.72) family.

Its subcellular location is the cell inner membrane. It catalyses the reaction K(+)(in) + H(+)(in) = K(+)(out) + H(+)(out). Its function is as follows. Responsible for the low-affinity transport of potassium into the cell. Likely operates as a K(+):H(+) symporter. In Shigella boydii serotype 18 (strain CDC 3083-94 / BS512), this protein is Low affinity potassium transport system protein Kup.